The sequence spans 366 residues: Peptide chain release factor 2 (366 aa).

Gln-246 carries the N5-methylglutamine modification.

Belongs to the prokaryotic/mitochondrial release factor family. Methylated by PrmC. Methylation increases the termination efficiency of RF2.

Its subcellular location is the cytoplasm. Functionally, peptide chain release factor 2 directs the termination of translation in response to the peptide chain termination codons UGA and UAA. This chain is Peptide chain release factor 2, found in Frankia casuarinae (strain DSM 45818 / CECT 9043 / HFP020203 / CcI3).